The following is a 208-amino-acid chain: Meiotically up-regulated gene 9 protein (208 aa).

The segment at 77 to 114 (VPASNEKAARVSNLKTVPSLKRENKEVNANSKPPVKQQ) is disordered.

Functionally, has a role in meiosis. The chain is Meiotically up-regulated gene 9 protein (mug9) from Schizosaccharomyces pombe (strain 972 / ATCC 24843) (Fission yeast).